The primary structure comprises 637 residues: 1-deoxy-D-xylulose-5-phosphate synthase (637 aa).

Residues H76 and G117–S119 contribute to the thiamine diphosphate site. D148 serves as a coordination point for Mg(2+). Residues G149–A150, N177, Y294, and E381 contribute to the thiamine diphosphate site. Mg(2+) is bound at residue N177.

Belongs to the transketolase family. DXPS subfamily. Homodimer. Mg(2+) serves as cofactor. Requires thiamine diphosphate as cofactor.

It catalyses the reaction D-glyceraldehyde 3-phosphate + pyruvate + H(+) = 1-deoxy-D-xylulose 5-phosphate + CO2. It functions in the pathway metabolic intermediate biosynthesis; 1-deoxy-D-xylulose 5-phosphate biosynthesis; 1-deoxy-D-xylulose 5-phosphate from D-glyceraldehyde 3-phosphate and pyruvate: step 1/1. In terms of biological role, catalyzes the acyloin condensation reaction between C atoms 2 and 3 of pyruvate and glyceraldehyde 3-phosphate to yield 1-deoxy-D-xylulose-5-phosphate (DXP). This is 1-deoxy-D-xylulose-5-phosphate synthase from Neisseria gonorrhoeae (strain NCCP11945).